A 61-amino-acid polypeptide reads, in one-letter code: MKAAELRKLTAEELKTKLVEQQQELFNLRFRHATAQLENTSSMGDARRTIARIQTILKEKE.

It belongs to the universal ribosomal protein uL29 family.

This is Large ribosomal subunit protein uL29 from Nitratidesulfovibrio vulgaris (strain ATCC 29579 / DSM 644 / CCUG 34227 / NCIMB 8303 / VKM B-1760 / Hildenborough) (Desulfovibrio vulgaris).